We begin with the raw amino-acid sequence, 283 residues long: Glutamate racemase (283 aa).

Substrate-binding positions include 28 to 29 (DS) and 60 to 61 (YG). C92 serves as the catalytic Proton donor/acceptor. Residue 93–94 (NT) coordinates substrate. The active-site Proton donor/acceptor is the C204. 205–206 (TH) contacts substrate.

This sequence belongs to the aspartate/glutamate racemases family.

It catalyses the reaction L-glutamate = D-glutamate. Its pathway is cell wall biogenesis; peptidoglycan biosynthesis. In terms of biological role, provides the (R)-glutamate required for cell wall biosynthesis. This Salmonella enteritidis PT4 (strain P125109) protein is Glutamate racemase.